A 542-amino-acid polypeptide reads, in one-letter code: Chaperonin GroEL 2 (542 aa).

ATP contacts are provided by residues 30-33, Lys51, 87-91, Gly415, and Asp496; these read TLGP and DGTTT.

It belongs to the chaperonin (HSP60) family. Forms a cylinder of 14 subunits composed of two heptameric rings stacked back-to-back. Interacts with the co-chaperonin GroES.

It localises to the cytoplasm. The enzyme catalyses ATP + H2O + a folded polypeptide = ADP + phosphate + an unfolded polypeptide.. Its function is as follows. Together with its co-chaperonin GroES, plays an essential role in assisting protein folding. The GroEL-GroES system forms a nano-cage that allows encapsulation of the non-native substrate proteins and provides a physical environment optimized to promote and accelerate protein folding. The sequence is that of Chaperonin GroEL 2 from Rhizobium leguminosarum.